A 208-amino-acid polypeptide reads, in one-letter code: TM2 domain-containing protein 1 (208 aa).

An N-terminal signal peptide occupies residues 1–37; the sequence is MAAAWPAGRASPAAGPPGLLRTLWLVTVAAGHCGAAA. The Extracellular segment spans residues 38-129; that stretch reads SGAVGGEETP…YSYKVAVALS (92 aa). N-linked (GlcNAc...) asparagine glycosylation is found at asparagine 73, asparagine 76, and asparagine 97. Residues 119–167 form the TM2 domain; the sequence is GYSYKVAVALSLFLGWLGADRFYLGYPALGLLKFCTVGFCGIGSLIDFI. Residues 130–150 form a helical membrane-spanning segment; sequence LFLGWLGADRFYLGYPALGLL. Residues 151–154 lie on the Cytoplasmic side of the membrane; that stretch reads KFCT. Residues 155–175 traverse the membrane as a helical segment; it reads VGFCGIGSLIDFILISMQIVG. The Extracellular segment spans residues 176–208; sequence PSDGSSYIIDYYGTRLTRLSITNETFRKTQLYP. N-linked (GlcNAc...) asparagine glycosylation is present at asparagine 198.

It belongs to the TM2 family. Interacts with APP beta-APP42 (amyloid-beta protein 42). In terms of processing, N-glycosylated.

It localises to the membrane. Its function is as follows. May participate in amyloid-beta-induced apoptosis via its interaction with beta-APP42. The sequence is that of TM2 domain-containing protein 1 (Tm2d1) from Mus musculus (Mouse).